A 37-amino-acid chain; its full sequence is Large ribosomal subunit protein bL36 (37 aa).

The protein belongs to the bacterial ribosomal protein bL36 family.

In Parasynechococcus marenigrum (strain WH8102), this protein is Large ribosomal subunit protein bL36.